Consider the following 367-residue polypeptide: Nodulation protein NolF (367 aa).

The protein belongs to the membrane fusion protein (MFP) (TC 8.A.1) family.

Functionally, involved in the production of Medicago-specific nodulation signal molecule. This Rhizobium meliloti (strain 1021) (Ensifer meliloti) protein is Nodulation protein NolF (nolF).